The chain runs to 398 residues: Cap-specific mRNA (nucleoside-2'-O-)-methyltransferase 1 (398 aa).

In terms of domain architecture, RrmJ-type SAM-dependent 2'-O-MTase spans 85–298 (QFSNRAGHKL…ERYLVCVDFL (214 aa)). G132 and D211 together coordinate S-adenosyl-L-methionine. The Proton acceptor role is filled by K252. Residues 371–398 (LKAKETTTRTSAESDDSPLSSRESCKDG) form a disordered region.

It catalyses the reaction a 5'-end (N(7)-methyl 5'-triphosphoguanosine)-ribonucleoside in mRNA + S-adenosyl-L-methionine = a 5'-end (N(7)-methyl 5'-triphosphoguanosine)-(2'-O-methyl-ribonucleoside) in mRNA + S-adenosyl-L-homocysteine + H(+). In terms of biological role, S-adenosyl-L-methionine-dependent methyltransferase that mediates RNA cap1 2'-O-ribose methylation to the 5'-cap structure of RNAs. Methylates the ribose of the first nucleotide of a m(7)GpppG-capped mRNA to produce m(7)GpppNmp (cap1). The protein is Cap-specific mRNA (nucleoside-2'-O-)-methyltransferase 1 of Leishmania braziliensis.